The following is a 320-amino-acid chain: UDP-N-acetylenolpyruvoylglucosamine reductase (320 aa).

Residues 34 to 200 (RAGGLAEVFF…TSAVFEGFAE (167 aa)) form the FAD-binding PCMH-type domain. The active site involves R180. The active-site Proton donor is the S229. E299 is an active-site residue.

The protein belongs to the MurB family. FAD serves as cofactor.

It localises to the cytoplasm. The enzyme catalyses UDP-N-acetyl-alpha-D-muramate + NADP(+) = UDP-N-acetyl-3-O-(1-carboxyvinyl)-alpha-D-glucosamine + NADPH + H(+). Its pathway is cell wall biogenesis; peptidoglycan biosynthesis. Functionally, cell wall formation. This Mesorhizobium japonicum (strain LMG 29417 / CECT 9101 / MAFF 303099) (Mesorhizobium loti (strain MAFF 303099)) protein is UDP-N-acetylenolpyruvoylglucosamine reductase.